The chain runs to 413 residues: 1-deoxy-D-xylulose 5-phosphate reductoisomerase (413 aa).

T28, G29, S30, I31, G54, R55, N56, and N142 together coordinate NADPH. Residue K143 participates in 1-deoxy-D-xylulose 5-phosphate binding. E144 is an NADPH binding site. D168 is a Mn(2+) binding site. 4 residues coordinate 1-deoxy-D-xylulose 5-phosphate: S169, E170, S194, and H217. E170 is a binding site for Mn(2+). G223 lines the NADPH pocket. Positions 230, 235, 236, and 239 each coordinate 1-deoxy-D-xylulose 5-phosphate. Residue E239 coordinates Mn(2+).

It belongs to the DXR family. Mg(2+) is required as a cofactor. It depends on Mn(2+) as a cofactor.

It carries out the reaction 2-C-methyl-D-erythritol 4-phosphate + NADP(+) = 1-deoxy-D-xylulose 5-phosphate + NADPH + H(+). Its pathway is isoprenoid biosynthesis; isopentenyl diphosphate biosynthesis via DXP pathway; isopentenyl diphosphate from 1-deoxy-D-xylulose 5-phosphate: step 1/6. Catalyzes the NADPH-dependent rearrangement and reduction of 1-deoxy-D-xylulose-5-phosphate (DXP) to 2-C-methyl-D-erythritol 4-phosphate (MEP). The chain is 1-deoxy-D-xylulose 5-phosphate reductoisomerase from Thermosynechococcus vestitus (strain NIES-2133 / IAM M-273 / BP-1).